The sequence spans 469 residues: Adenosylhomocysteinase (469 aa).

Thr63, Asp139, and Glu164 together coordinate substrate. Residue 165–167 participates in NAD(+) binding; it reads TTT. Substrate contacts are provided by Lys194 and Asp198. Residues Asn199, 228-233, Glu251, Asn300, 321-323, and Asn375 contribute to the NAD(+) site; these read GYGDVG and IGH.

It belongs to the adenosylhomocysteinase family. It depends on NAD(+) as a cofactor.

The protein localises to the cytoplasm. The enzyme catalyses S-adenosyl-L-homocysteine + H2O = L-homocysteine + adenosine. It participates in amino-acid biosynthesis; L-homocysteine biosynthesis; L-homocysteine from S-adenosyl-L-homocysteine: step 1/1. In terms of biological role, may play a key role in the regulation of the intracellular concentration of adenosylhomocysteine. This is Adenosylhomocysteinase from Pseudomonas syringae pv. tomato (strain ATCC BAA-871 / DC3000).